Here is a 270-residue protein sequence, read N- to C-terminus: Sec-independent protein translocase protein TatC (270 aa).

Helical transmembrane passes span 35-55 (LILS…YRVQ), 93-113 (AFWA…WAFI), 124-144 (WGLP…VFGY), 176-196 (VVTF…AVIL), 209-229 (QGWR…TPTP), and 231-251 (PANM…GVVL).

This sequence belongs to the TatC family. As to quaternary structure, forms a complex with TatA.

The protein resides in the cell membrane. Part of the twin-arginine translocation (Tat) system that transports large folded proteins containing a characteristic twin-arginine motif in their signal peptide across membranes. The polypeptide is Sec-independent protein translocase protein TatC (Deinococcus radiodurans (strain ATCC 13939 / DSM 20539 / JCM 16871 / CCUG 27074 / LMG 4051 / NBRC 15346 / NCIMB 9279 / VKM B-1422 / R1)).